We begin with the raw amino-acid sequence, 358 residues long: Protein-glutamate methylesterase/protein-glutamine glutaminase 1 (358 aa).

Residues 7–124 (SVLLVDDSAV…KNFLIDSAAE (118 aa)) form the Response regulatory domain. The residue at position 58 (D58) is a 4-aspartylphosphate. Positions 170–358 (AQTTERIVAI…QEIHQAILHR (189 aa)) constitute a CheB-type methylesterase domain. Catalysis depends on residues S182, H208, and D304.

The protein belongs to the CheB family. In terms of processing, phosphorylated by CheA. Phosphorylation of the N-terminal regulatory domain activates the methylesterase activity.

Its subcellular location is the cytoplasm. It catalyses the reaction [protein]-L-glutamate 5-O-methyl ester + H2O = L-glutamyl-[protein] + methanol + H(+). The enzyme catalyses L-glutaminyl-[protein] + H2O = L-glutamyl-[protein] + NH4(+). Functionally, involved in chemotaxis. Part of a chemotaxis signal transduction system that modulates chemotaxis in response to various stimuli. Catalyzes the demethylation of specific methylglutamate residues introduced into the chemoreceptors (methyl-accepting chemotaxis proteins or MCP) by CheR. Also mediates the irreversible deamidation of specific glutamine residues to glutamic acid. The protein is Protein-glutamate methylesterase/protein-glutamine glutaminase 1 of Pseudomonas savastanoi pv. phaseolicola (strain 1448A / Race 6) (Pseudomonas syringae pv. phaseolicola (strain 1448A / Race 6)).